The chain runs to 330 residues: MKKSFIHQQEEISFVKNTFTQYLIAKLDVVEVQGPILSRVGDGMQDNLSGTENPVSVNVLKIPNATFEVVHSLAKWKRHTLARFGFNEGEGLVVNMKALRPDEDSLDQTHSVYVDQWDWEKVIPDGKRNLAYLKETVETIYKVIRLTELAVEARYDIEAVLPKKITFIHTEELVAEYPDLTPKERENAITKEFGAVFLIGIGGVLPDGKPHDGRAPDYDDWTTETENGYHGLNGDILVWNDQLGSAFELSSMGIRVDEEALKRQVEMTGDQDRLAFDWHKSLLNGLFPLTIGGGIGQSRMVMFLLRKKHIGEVQTSVWPQEVRDSYDNIL.

The protein belongs to the class-II aminoacyl-tRNA synthetase family. AsnA subfamily.

Its subcellular location is the cytoplasm. The enzyme catalyses L-aspartate + NH4(+) + ATP = L-asparagine + AMP + diphosphate + H(+). Its pathway is amino-acid biosynthesis; L-asparagine biosynthesis; L-asparagine from L-aspartate (ammonia route): step 1/1. The sequence is that of Aspartate--ammonia ligase from Streptococcus pyogenes serotype M5 (strain Manfredo).